A 201-amino-acid chain; its full sequence is Dephospho-CoA kinase (201 aa).

The DPCK domain occupies 4-201 (AFFVTASIAC…VIQEISKGNM (198 aa)). ATP is bound at residue 12 to 17 (ACGKST).

Belongs to the CoaE family.

The protein resides in the cytoplasm. It carries out the reaction 3'-dephospho-CoA + ATP = ADP + CoA + H(+). Its pathway is cofactor biosynthesis; coenzyme A biosynthesis; CoA from (R)-pantothenate: step 5/5. Functionally, catalyzes the phosphorylation of the 3'-hydroxyl group of dephosphocoenzyme A to form coenzyme A. This Campylobacter jejuni subsp. jejuni serotype O:2 (strain ATCC 700819 / NCTC 11168) protein is Dephospho-CoA kinase.